We begin with the raw amino-acid sequence, 211 residues long: N-(5'-phosphoribosyl)anthranilate isomerase (211 aa).

This sequence belongs to the TrpF family.

The enzyme catalyses N-(5-phospho-beta-D-ribosyl)anthranilate = 1-(2-carboxyphenylamino)-1-deoxy-D-ribulose 5-phosphate. It functions in the pathway amino-acid biosynthesis; L-tryptophan biosynthesis; L-tryptophan from chorismate: step 3/5. The chain is N-(5'-phosphoribosyl)anthranilate isomerase from Methanococcus maripaludis (strain DSM 14266 / JCM 13030 / NBRC 101832 / S2 / LL).